Consider the following 263-residue polypeptide: Splicing regulator sde2 (263 aa).

Positions 1–84 are cleaved as a propeptide — UBL; that stretch reads MECKTVFLNG…LTLCTRVLGG (84 aa). 3 disordered regions span residues 95-118, 137-158, and 194-263; these read AGGR…LDGN, PAET…LAAD, and STSA…LYGL. The segment covering 102–117 has biased composition (basic and acidic residues); the sequence is KRNEQENQDSCRDLDG. 2 stretches are compositionally biased toward low complexity: residues 194–209 and 219–230; these read STSA…GATT and NNNSSINSWSRR.

Belongs to the SDE2 family. Interacts with cay1/cactin. Interacts with prp19. Interacts with cwf12. Interacts with cdc5. The N-terminal UBL (ubiquitin-like) propeptide is cleaved at Gly-84 by the deubiquitinating enzymes ubp5 and ubp15; the resulting mature sde2 associates with spliceosomes. In terms of processing, polyubiquitinated; ubiquitination is partially dependent on ubr11.

It is found in the cytoplasm. The protein localises to the nucleus. In terms of biological role, plays a role in pre-mRNA splicing by facilitating excision of introns featuring relatively long (&gt;21 nucleotides) spacing between the branchpoint and 3'-splice site (ss). Recruits cactin to the spliceosome which may enable folding of RNA between the branchpoint and 3'-ss, to guide the splice site towards the spliceosome's catalytic center. Required for proper chromatin organization by assisting splicing of components involved in genomic stability and telomere organization. The protein is Splicing regulator sde2 of Schizosaccharomyces pombe (strain 972 / ATCC 24843) (Fission yeast).